We begin with the raw amino-acid sequence, 660 residues long: UvrABC system protein B (660 aa).

One can recognise a Helicase ATP-binding domain in the interval 26–196 (DGIDEKKEHQ…ELNKGQFDVK (171 aa)). Position 39 to 46 (39 to 46 (GVTGSGKT)) interacts with ATP. The Beta-hairpin motif lies at 92 to 115 (YFDFYKPEAYIPKSDLYIEKTSKN). The region spanning 431 to 593 (QIEDIYDHLK…IIPKTIVKPI (163 aa)) is the Helicase C-terminal domain. The region spanning 622–657 (KKFIDQMVRKMTQLAKANKFEEAIEIRDYLIEIGIE) is the UVR domain.

It belongs to the UvrB family. As to quaternary structure, forms a heterotetramer with UvrA during the search for lesions. Interacts with UvrC in an incision complex.

The protein resides in the cytoplasm. In terms of biological role, the UvrABC repair system catalyzes the recognition and processing of DNA lesions. A damage recognition complex composed of 2 UvrA and 2 UvrB subunits scans DNA for abnormalities. Upon binding of the UvrA(2)B(2) complex to a putative damaged site, the DNA wraps around one UvrB monomer. DNA wrap is dependent on ATP binding by UvrB and probably causes local melting of the DNA helix, facilitating insertion of UvrB beta-hairpin between the DNA strands. Then UvrB probes one DNA strand for the presence of a lesion. If a lesion is found the UvrA subunits dissociate and the UvrB-DNA preincision complex is formed. This complex is subsequently bound by UvrC and the second UvrB is released. If no lesion is found, the DNA wraps around the other UvrB subunit that will check the other stand for damage. The polypeptide is UvrABC system protein B (Metamycoplasma arthritidis (strain 158L3-1) (Mycoplasma arthritidis)).